The chain runs to 219 residues: Probable GTP-binding protein EngB (219 aa).

The region spanning 31–205 (VGVEIAFAGR…LSILNEWCHP (175 aa)) is the EngB-type G domain. GTP contacts are provided by residues 39–46 (GRSNAGKS), 66–70 (GRTQL), 84–87 (DLPG), 151–154 (TKSD), and 184–186 (FSS). Residues Ser-46 and Thr-68 each coordinate Mg(2+).

It belongs to the TRAFAC class TrmE-Era-EngA-EngB-Septin-like GTPase superfamily. EngB GTPase family. The cofactor is Mg(2+).

Its function is as follows. Necessary for normal cell division and for the maintenance of normal septation. In Shewanella denitrificans (strain OS217 / ATCC BAA-1090 / DSM 15013), this protein is Probable GTP-binding protein EngB.